The chain runs to 206 residues: CBS domain-containing protein CBSX3, mitochondrial (206 aa).

Residues 1–39 constitute a mitochondrion transit peptide; it reads MQGVIRSFVSGGNVVKGSVLQHLRVINPAIQPSVFCSRS. CBS domains are found at residues 61-127 and 136-194; these read MKSK…GRSS and MTEE…HREE.

The protein resides in the mitochondrion. The sequence is that of CBS domain-containing protein CBSX3, mitochondrial (CBSX3) from Arabidopsis thaliana (Mouse-ear cress).